Here is a 96-residue protein sequence, read N- to C-terminus: Co-chaperonin GroES (96 aa).

The protein belongs to the GroES chaperonin family. In terms of assembly, heptamer of 7 subunits arranged in a ring. Interacts with the chaperonin GroEL.

It is found in the cytoplasm. Together with the chaperonin GroEL, plays an essential role in assisting protein folding. The GroEL-GroES system forms a nano-cage that allows encapsulation of the non-native substrate proteins and provides a physical environment optimized to promote and accelerate protein folding. GroES binds to the apical surface of the GroEL ring, thereby capping the opening of the GroEL channel. The chain is Co-chaperonin GroES from Actinobacillus pleuropneumoniae serotype 7 (strain AP76).